The sequence spans 751 residues: Semaphorin-3C (751 aa).

The signal sequence occupies residues 1 to 20 (MAFRTICVLVGVFICSICVK). Residues 28–511 (RVYLTFDELR…SNEGVSQVSL (484 aa)) form the Sema domain. N-linked (GlcNAc...) asparagine glycosylation is present at Asn81. Cys101 and Cys112 form a disulfide bridge. Asn123 carries N-linked (GlcNAc...) asparagine glycosylation. The cysteines at positions 130 and 139 are disulfide-linked. N-linked (GlcNAc...) asparagine glycosylation is found at Asn252 and Asn268. 2 disulfide bridges follow: Cys266-Cys378 and Cys290-Cys338. N-linked (GlcNAc...) asparagine glycosylation is present at Asn465. Cys514 and Cys532 are joined by a disulfide. In terms of domain architecture, Ig-like C2-type spans 571–655 (AYRNAAEIVQ…TENSFKQTIA (85 aa)). N-linked (GlcNAc...) asparagine glycans are attached at residues Asn585 and Asn586. An intrachain disulfide couples Cys643 to Cys709. Residues 712–731 (TRQQHQQGDESQKMRGDYGK) show a composition bias toward basic and acidic residues. The segment at 712–751 (TRQQHQQGDESQKMRGDYGKLKALINSRKSRNRRNQLPES) is disordered.

This sequence belongs to the semaphorin family. As to quaternary structure, interacts with PLXND1. As to expression, expressed intensely in the heart, skeletal muscle, colon, small intestine, ovary, testis, and prostate. Faint expression ubiquitously among other organs, including brain.

It is found in the secreted. Its function is as follows. Binds to plexin family members and plays an important role in the regulation of developmental processes. Required for normal cardiovascular development during embryogenesis. Functions as attractant for growing axons, and thereby plays an important role in axon growth and axon guidance. This chain is Semaphorin-3C (SEMA3C), found in Homo sapiens (Human).